Reading from the N-terminus, the 613-residue chain is Azole resistance protein 1 (613 aa).

A disordered region spans residues 1 to 38 (MKGEPKTYSMSDLSYYGEKAQQQNEKQQKQYVVRRNST). The Extracellular portion of the chain corresponds to 1–70 (MKGEPKTYSM…PKGFILYASL (70 aa)). Residues 71 to 91 (IALALSLFLAALDIMIVSTII) form a helical membrane-spanning segment. Over 92 to 102 (EEVAKQFGSYS) the chain is Cytoplasmic. The chain crosses the membrane as a helical span at residues 103-123 (EIGWLFTGYSLPNALLALIWG). Topologically, residues 124 to 134 (RIATPIGFKET) are extracellular. Residues 135 to 155 (MLFAIVIFEIGSLISALANSM) form a helical membrane-spanning segment. The Cytoplasmic portion of the chain corresponds to 156–163 (SMLIGGRV). The chain crosses the membrane as a helical span at residues 164 to 184 (IAGVGGCGIQSLSFVIGSTLV). At 185-189 (EESQR) the chain is on the extracellular side. The chain crosses the membrane as a helical span at residues 190-210 (GILIAVLSCSFAIASVVGPFL). The Cytoplasmic portion of the chain corresponds to 211-221 (GGVFTSSVTWR). A helical transmembrane segment spans residues 222-242 (WCFYVNLPIGGLAFFLFLFFY). Topologically, residues 243–298 (NPGLSTFQETMDNIRKFPSQFIEIVRNVAYHLLKIKGFSKLNGWRKPFMELIFMYD) are extracellular. Residues 299–319 (IIEFVFCSAGFTCILLAFTFG) form a helical membrane-spanning segment. Over 320–329 (GNRYAWNSAS) the chain is Cytoplasmic. Residues 330–350 (IIILFIIGIVLVVLAGIYDFL) form a helical membrane-spanning segment. Over 351-375 (VFPKFNIVKATPHYQPLMSWTNIKK) the chain is Extracellular. The helical transmembrane segment at 376 to 396 (PGIFTVNIALFLTCAGYISQF) threads the bilayer. Residues 397 to 414 (TYIVQYFQLIYNDSAWRA) lie on the Cytoplasmic side of the membrane. A helical transmembrane segment spans residues 415–435 (AVHLVACIISTVVTAILCGAI). The Extracellular portion of the chain corresponds to 436-443 (TDKTRQIK). Residues 444–464 (PIIVISSIFGVVGAGILTLLN) traverse the membrane as a helical segment. Over 465–472 (NNANNSAH) the chain is Cytoplasmic. Residues 473–493 (IGLLILPGVAFGGLAQSSMLA) form a helical membrane-spanning segment. The Extracellular segment spans residues 494–581 (SQIQLDKKSP…SKLGNIISES (88 aa)). The helical transmembrane segment at 582–602 (LTDVFYMALGFYALSLIFAVF) threads the bilayer. The Cytoplasmic segment spans residues 603–613 (ASNKKVTASLR).

Belongs to the major facilitator superfamily.

Its subcellular location is the cell membrane. Functionally, transporter protein required for adaptation to high stress imposed by low-chain organic acids, in particular by acetic acid, and for resistance to azoles, especially to ketoconazole and fluconazole. The protein is Azole resistance protein 1 (AZR1) of Saccharomyces cerevisiae (strain ATCC 204508 / S288c) (Baker's yeast).